Reading from the N-terminus, the 212-residue chain is Thiamine-phosphate synthase (212 aa).

Residues 40–44 (QFREK) and Asn-75 contribute to the 4-amino-2-methyl-5-(diphosphooxymethyl)pyrimidine site. Mg(2+) is bound by residues Asp-76 and Asp-95. Residue Ser-113 participates in 4-amino-2-methyl-5-(diphosphooxymethyl)pyrimidine binding. 139–141 (TSS) serves as a coordination point for 2-[(2R,5Z)-2-carboxy-4-methylthiazol-5(2H)-ylidene]ethyl phosphate. Residue Lys-142 participates in 4-amino-2-methyl-5-(diphosphooxymethyl)pyrimidine binding. 2-[(2R,5Z)-2-carboxy-4-methylthiazol-5(2H)-ylidene]ethyl phosphate-binding positions include Gly-171 and 191 to 192 (IS).

Belongs to the thiamine-phosphate synthase family. Requires Mg(2+) as cofactor.

The catalysed reaction is 2-[(2R,5Z)-2-carboxy-4-methylthiazol-5(2H)-ylidene]ethyl phosphate + 4-amino-2-methyl-5-(diphosphooxymethyl)pyrimidine + 2 H(+) = thiamine phosphate + CO2 + diphosphate. The enzyme catalyses 2-(2-carboxy-4-methylthiazol-5-yl)ethyl phosphate + 4-amino-2-methyl-5-(diphosphooxymethyl)pyrimidine + 2 H(+) = thiamine phosphate + CO2 + diphosphate. It catalyses the reaction 4-methyl-5-(2-phosphooxyethyl)-thiazole + 4-amino-2-methyl-5-(diphosphooxymethyl)pyrimidine + H(+) = thiamine phosphate + diphosphate. Its pathway is cofactor biosynthesis; thiamine diphosphate biosynthesis; thiamine phosphate from 4-amino-2-methyl-5-diphosphomethylpyrimidine and 4-methyl-5-(2-phosphoethyl)-thiazole: step 1/1. Condenses 4-methyl-5-(beta-hydroxyethyl)thiazole monophosphate (THZ-P) and 2-methyl-4-amino-5-hydroxymethyl pyrimidine pyrophosphate (HMP-PP) to form thiamine monophosphate (TMP). In Staphylococcus epidermidis (strain ATCC 35984 / DSM 28319 / BCRC 17069 / CCUG 31568 / BM 3577 / RP62A), this protein is Thiamine-phosphate synthase.